We begin with the raw amino-acid sequence, 521 residues long: Membrane-bound transcription factor site-2 protease (521 aa).

Over 1–3 (MIP) the chain is Cytoplasmic. A helical transmembrane segment spans residues 4-24 (VSLVVVVVGGWTVVYLTDLVL). The Lumenal portion of the chain corresponds to 25-74 (KSSVYFKHSYEDWLESNGLSISPFHIRWQTAVFNRAFYSWGRRKARMLYQ). 2 helical membrane-spanning segments follow: residues 75–95 (WFNF…FLLG) and 96–107 (KTLMQTLAQMMA). Residues 108 to 146 (DSPSSYSSSSSSSSSSSSSSSSSSSSSSSSSLHNEQVLQ) are Lumenal-facing. Residues 113-137 (YSSSSSSSSSSSSSSSSSSSSSSSS) form a disordered region. Residues 147–171 (VVVPGINLPVNQLTYFFAAVLISGV) form a helical membrane-spanning segment. Residue His173 coordinates Zn(2+). Glu174 is an active-site residue. A run of 3 helical transmembrane segments spans residues 176–188 (GHGI…QVRF), 189–211 (NGFG…TTHL), and 231–253 (FVLA…PFYY). His177 provides a ligand contact to Zn(2+). At 254–448 (TGVGVLITEV…LPVVVETFVK (195 aa)) the chain is on the lumenal side. A glycan (N-linked (GlcNAc...) asparagine) is linked at Asn339. 2 consecutive transmembrane segments (helical) span residues 449–466 (YLIS…VPCF) and 467–478 (ALDGQWILNSFL). At 479 to 494 (DATLTSVIGDNDVKDL) the chain is on the lumenal side. Residues 495-515 (IGFFILLGGSVLLAANVTLGL) traverse the membrane as a helical segment. At 516–521 (WMVTAR) the chain is on the cytoplasmic side.

This sequence belongs to the peptidase M50A family. It depends on Zn(2+) as a cofactor.

It localises to the membrane. The protein localises to the cytoplasm. Its subcellular location is the golgi apparatus membrane. The catalysed reaction is Cleaves several transcription factors that are type-2 transmembrane proteins within membrane-spanning domains. Known substrates include sterol regulatory element-binding protein (SREBP) -1, SREBP-2 and forms of the transcriptional activator ATF6. SREBP-2 is cleaved at the site 477-DRSRILL-|-CVLTFLCLSFNPLTSLLQWGGA-505. The residues Asn-Pro, 11 residues distal to the site of cleavage in the membrane-spanning domain, are important for cleavage by S2P endopeptidase. Replacement of either of these residues does not prevent cleavage, but there is no cleavage if both of these residues are replaced.. Its function is as follows. Zinc metalloprotease that mediates intramembrane proteolysis of proteins such as ATF6, ATF6B, SREBF1/SREBP1 and SREBF2/SREBP2. Catalyzes the second step in the proteolytic activation of the sterol regulatory element-binding proteins (SREBPs) SREBF1/SREBP1 and SREBF2/SREBP2: cleaves SREBPs within the first transmembrane segment, thereby releasing the N-terminal segment with a portion of the transmembrane segment attached. Mature N-terminal SREBP fragments shuttle to the nucleus and activate gene transcription. Also mediates the second step in the proteolytic activation of the cyclic AMP-dependent transcription factor ATF-6 (ATF6 and ATF6B). Involved in intramembrane proteolysis during bone formation. In astrocytes and osteoblasts, upon DNA damage and ER stress, mediates the second step of the regulated intramembrane proteolytic activation of the transcription factor CREB3L1, leading to the inhibition of cell-cycle progression. This Pongo abelii (Sumatran orangutan) protein is Membrane-bound transcription factor site-2 protease (MBTPS2).